The following is a 222-amino-acid chain: Pyridoxine/pyridoxamine 5'-phosphate oxidase (222 aa).

FMN-binding positions include 69–74, 84–85, Lys-91, and Gln-113; these read RMVLLK and YT. Residue Lys-74 participates in substrate binding. Substrate contacts are provided by Tyr-131, Arg-135, and Ser-139. FMN contacts are provided by residues 148 to 149 and Trp-193; that span reads QS. 199–201 contributes to the substrate binding site; that stretch reads RLH. Arg-203 lines the FMN pocket.

The protein belongs to the pyridoxamine 5'-phosphate oxidase family. Homodimer. FMN serves as cofactor.

It carries out the reaction pyridoxamine 5'-phosphate + O2 + H2O = pyridoxal 5'-phosphate + H2O2 + NH4(+). The catalysed reaction is pyridoxine 5'-phosphate + O2 = pyridoxal 5'-phosphate + H2O2. Its pathway is cofactor metabolism; pyridoxal 5'-phosphate salvage; pyridoxal 5'-phosphate from pyridoxamine 5'-phosphate: step 1/1. The protein operates within cofactor metabolism; pyridoxal 5'-phosphate salvage; pyridoxal 5'-phosphate from pyridoxine 5'-phosphate: step 1/1. In terms of biological role, catalyzes the oxidation of either pyridoxine 5'-phosphate (PNP) or pyridoxamine 5'-phosphate (PMP) into pyridoxal 5'-phosphate (PLP). The polypeptide is Pyridoxine/pyridoxamine 5'-phosphate oxidase (Maricaulis maris (strain MCS10) (Caulobacter maris)).